We begin with the raw amino-acid sequence, 725 residues long: Probable dipeptidyl-peptidase 5 (725 aa).

Positions 1 to 18 (MGALRWLSIAATASTALA) are cleaved as a signal peptide. 6 N-linked (GlcNAc...) asparagine glycosylation sites follow: Asn75, Asn96, Asn153, Asn258, Asn383, and Asn453. Ser563 (charge relay system) is an active-site residue. Asn610 carries N-linked (GlcNAc...) asparagine glycosylation. Residues Asp646 and His678 each act as charge relay system in the active site.

This sequence belongs to the peptidase S9C family.

The protein resides in the secreted. Its function is as follows. Extracellular dipeptidyl-peptidase which removes N-terminal dipeptides sequentially from polypeptides having unsubstituted N-termini. This Aspergillus flavus (strain ATCC 200026 / FGSC A1120 / IAM 13836 / NRRL 3357 / JCM 12722 / SRRC 167) protein is Probable dipeptidyl-peptidase 5 (dpp5).